The sequence spans 727 residues: Phosphoribosylformylglycinamidine synthase subunit PurL (727 aa).

H47 is a catalytic residue. Positions 50 and 82 each coordinate ATP. Mg(2+) is bound at residue E84. Substrate contacts are provided by residues 85–88 (SHNH) and R107. H86 functions as the Proton acceptor in the catalytic mechanism. D108 is a binding site for Mg(2+). A substrate-binding site is contributed by Q229. D257 is a binding site for Mg(2+). 301–303 (ESQ) is a substrate binding site. ATP is bound by residues D486 and G523. Mg(2+) is bound at residue N524. S526 serves as a coordination point for substrate.

It belongs to the FGAMS family. In terms of assembly, monomer. Part of the FGAM synthase complex composed of 1 PurL, 1 PurQ and 2 PurS subunits.

It is found in the cytoplasm. The enzyme catalyses N(2)-formyl-N(1)-(5-phospho-beta-D-ribosyl)glycinamide + L-glutamine + ATP + H2O = 2-formamido-N(1)-(5-O-phospho-beta-D-ribosyl)acetamidine + L-glutamate + ADP + phosphate + H(+). Its pathway is purine metabolism; IMP biosynthesis via de novo pathway; 5-amino-1-(5-phospho-D-ribosyl)imidazole from N(2)-formyl-N(1)-(5-phospho-D-ribosyl)glycinamide: step 1/2. In terms of biological role, part of the phosphoribosylformylglycinamidine synthase complex involved in the purines biosynthetic pathway. Catalyzes the ATP-dependent conversion of formylglycinamide ribonucleotide (FGAR) and glutamine to yield formylglycinamidine ribonucleotide (FGAM) and glutamate. The FGAM synthase complex is composed of three subunits. PurQ produces an ammonia molecule by converting glutamine to glutamate. PurL transfers the ammonia molecule to FGAR to form FGAM in an ATP-dependent manner. PurS interacts with PurQ and PurL and is thought to assist in the transfer of the ammonia molecule from PurQ to PurL. The chain is Phosphoribosylformylglycinamidine synthase subunit PurL from Petrotoga mobilis (strain DSM 10674 / SJ95).